A 131-amino-acid chain; its full sequence is Large ribosomal subunit protein bL12 (131 aa).

The protein belongs to the bacterial ribosomal protein bL12 family. Homodimer. Part of the ribosomal stalk of the 50S ribosomal subunit. Forms a multimeric L10(L12)X complex, where L10 forms an elongated spine to which 2 to 4 L12 dimers bind in a sequential fashion. Binds GTP-bound translation factors.

In terms of biological role, forms part of the ribosomal stalk which helps the ribosome interact with GTP-bound translation factors. Is thus essential for accurate translation. This Prochlorococcus marinus (strain MIT 9312) protein is Large ribosomal subunit protein bL12.